The primary structure comprises 240 residues: uncharacterized protein (240 aa).

Asp-66 serves as the catalytic Proton acceptor. The active site involves Asp-129. The active-site Proton acceptor is His-131.

The protein belongs to the glucosamine/galactosamine-6-phosphate isomerase family.

This is an uncharacterized protein from Escherichia coli (strain K12).